The primary structure comprises 305 residues: Aspartate carbamoyltransferase catalytic subunit (305 aa).

Residues Arg-54 and Thr-55 each contribute to the carbamoyl phosphate site. Lys-83 contacts L-aspartate. Carbamoyl phosphate contacts are provided by Arg-104, His-132, and Gln-135. Arg-165 and Arg-226 together coordinate L-aspartate. Residues Leu-265 and Pro-266 each contribute to the carbamoyl phosphate site.

This sequence belongs to the aspartate/ornithine carbamoyltransferase superfamily. ATCase family. In terms of assembly, heterooligomer of catalytic and regulatory chains.

It catalyses the reaction carbamoyl phosphate + L-aspartate = N-carbamoyl-L-aspartate + phosphate + H(+). It participates in pyrimidine metabolism; UMP biosynthesis via de novo pathway; (S)-dihydroorotate from bicarbonate: step 2/3. Catalyzes the condensation of carbamoyl phosphate and aspartate to form carbamoyl aspartate and inorganic phosphate, the committed step in the de novo pyrimidine nucleotide biosynthesis pathway. The protein is Aspartate carbamoyltransferase catalytic subunit of Pyrobaculum calidifontis (strain DSM 21063 / JCM 11548 / VA1).